The sequence spans 168 residues: Small ribosomal subunit protein bS16 (168 aa).

The interval 110 to 168 (LSEANNGPTAEAITEKKKKAREEKEAKEAAEKAAAEKAAAAEAEASEEAPAEEAASEEA) is disordered. A compositionally biased stretch (basic and acidic residues) spans 129–144 (AREEKEAKEAAEKAAA). The span at 153-168 (EASEEAPAEEAASEEA) shows a compositional bias: acidic residues.

It belongs to the bacterial ribosomal protein bS16 family.

The sequence is that of Small ribosomal subunit protein bS16 from Corynebacterium efficiens (strain DSM 44549 / YS-314 / AJ 12310 / JCM 11189 / NBRC 100395).